A 371-amino-acid chain; its full sequence is Beta-1,3-galactosyltransferase 4 (371 aa).

The Cytoplasmic portion of the chain corresponds to 1–4 (MPLS). Residues 5–25 (LFRRLLLAVLLLVIIWTLFGP) traverse the membrane as a helical; Signal-anchor for type II membrane protein segment. Topologically, residues 26–371 (SGLGEELLSL…RCRFIAWLNS (346 aa)) are lumenal. An N-linked (GlcNAc...) asparagine glycan is attached at Asn-143. The disordered stretch occupies residues 187 to 208 (GGPSEQWQKGKEPQEETTAVHK). The span at 194–207 (QKGKEPQEETTAVH) shows a compositional bias: basic and acidic residues.

Belongs to the glycosyltransferase 31 family. In terms of tissue distribution, highly expressed in thymus, spleen, kidney and testis and, to a lesser extent, in brain and liver.

The protein localises to the golgi apparatus membrane. It catalyses the reaction a ganglioside GM2 (d18:1(4E)) + UDP-alpha-D-galactose = a ganglioside GM1 (d18:1(4E)) + UDP + H(+). The enzyme catalyses a ganglioside GM2 + UDP-alpha-D-galactose = a ganglioside GM1 + UDP + H(+). The catalysed reaction is a ganglioside GD2 (d18:1(4E)) + UDP-alpha-D-galactose = a ganglioside GD1b (d18:1(4E)) + UDP + H(+). It carries out the reaction a ganglioside GA2 (d18:1(4E)) + UDP-alpha-D-galactose = a ganglioside GA1 (d18:1(4E)) + UDP + H(+). The protein operates within protein modification; protein glycosylation. In terms of biological role, involved in GM1/GD1B/GA1 ganglioside biosynthesis. This Rattus norvegicus (Rat) protein is Beta-1,3-galactosyltransferase 4 (B3galt4).